The following is a 321-amino-acid chain: tRNA U34 carboxymethyltransferase (321 aa).

Carboxy-S-adenosyl-L-methionine-binding positions include lysine 90, tryptophan 104, lysine 109, glycine 129, 151–153 (DPT), 180–181 (IE), methionine 195, tyrosine 199, and arginine 314.

It belongs to the class I-like SAM-binding methyltransferase superfamily. CmoB family. As to quaternary structure, homotetramer.

The enzyme catalyses carboxy-S-adenosyl-L-methionine + 5-hydroxyuridine(34) in tRNA = 5-carboxymethoxyuridine(34) in tRNA + S-adenosyl-L-homocysteine + H(+). Catalyzes carboxymethyl transfer from carboxy-S-adenosyl-L-methionine (Cx-SAM) to 5-hydroxyuridine (ho5U) to form 5-carboxymethoxyuridine (cmo5U) at position 34 in tRNAs. This is tRNA U34 carboxymethyltransferase from Histophilus somni (strain 129Pt) (Haemophilus somnus).